The primary structure comprises 115 residues: Phosphoribosyl-AMP cyclohydrolase (115 aa).

Asp-80 lines the Mg(2+) pocket. Residue Cys-81 coordinates Zn(2+). Positions 82 and 84 each coordinate Mg(2+). Positions 97 and 104 each coordinate Zn(2+).

It belongs to the PRA-CH family. Homodimer. The cofactor is Mg(2+). Zn(2+) serves as cofactor.

The protein resides in the cytoplasm. It carries out the reaction 1-(5-phospho-beta-D-ribosyl)-5'-AMP + H2O = 1-(5-phospho-beta-D-ribosyl)-5-[(5-phospho-beta-D-ribosylamino)methylideneamino]imidazole-4-carboxamide. The protein operates within amino-acid biosynthesis; L-histidine biosynthesis; L-histidine from 5-phospho-alpha-D-ribose 1-diphosphate: step 3/9. In terms of biological role, catalyzes the hydrolysis of the adenine ring of phosphoribosyl-AMP. This chain is Phosphoribosyl-AMP cyclohydrolase, found in Mycobacterium leprae (strain Br4923).